Consider the following 780-residue polypeptide: Cation channel sperm-associated protein 1 (780 aa).

Disordered regions lie at residues Met1–Ser37, Leu71–His306, and Gln376–Thr412. Topologically, residues Met1 to Leu447 are cytoplasmic. Positions Ser110–Asp122 are enriched in basic and acidic residues. The span at Gln211–Pro241 shows a compositional bias: basic residues. A compositionally biased stretch (basic and acidic residues) spans Ser261–His284. Over residues His285 to Tyr299 the composition is skewed to basic residues. Residues Ser387 to Phe401 are compositionally biased toward basic and acidic residues. Basic residues predominate over residues Gln402–Thr412. Residues Ala448 to Phe469 form a helical membrane-spanning segment. Over Ala470–Trp478 the chain is Extracellular. The helical transmembrane segment at Tyr479–Ile500 threads the bilayer. Residues Ala501–Phe508 lie on the Cytoplasmic side of the membrane. The chain crosses the membrane as a helical span at residues Asp509–Thr531. Residues His532 to Ser540 lie on the Extracellular side of the membrane. The helical transmembrane segment at Leu541–Leu563 threads the bilayer. At Ser564–Pro581 the chain is on the cytoplasmic side. The helical transmembrane segment at Ser582 to Leu604 threads the bilayer. The Extracellular segment spans residues Phe605 to Asn615. The segment at residues Ile616–Thr628 is an intramembrane region (helical; Pore-forming). Over Leu629–Trp645 the chain is Extracellular. A helical transmembrane segment spans residues Tyr646–Val671. At Asp672 to Asn780 the chain is on the cytoplasmic side.

It belongs to the cation channel sperm-associated (TC 1.A.1.19) family. In terms of assembly, component of the CatSper complex or CatSpermasome composed of the core pore-forming members CATSPER1, CATSPER2, CATSPER3 and CATSPER4 as well as auxiliary members CATSPERB, CATSPERG, CATSPERD, CATSPERE, CATSPERZ, C2CD6/CATSPERT, TMEM249, TMEM262 and EFCAB9. HSPA1 may be an additional auxiliary complex member. The core complex members CATSPER1, CATSPER2, CATSPER3 and CATSPER4 form a heterotetrameric channel. The auxiliary CATSPERB, CATSPERG, CATSPERD and CATSPERE subunits form a pavilion-like structure over the pore which stabilizes the complex through interactions with CATSPER4, CATSPER3, CATSPER1 and CATSPER2 respectively. TMEM262/CATSPERH interacts with CATSPERB, further stabilizing the complex. C2CD6/CATSPERT interacts at least with CATSPERD and is required for targeting the CatSper complex in the flagellar membrane. Interacts with Ca(v)3.3/CACNA1I, leading to suppression of T-type calcium channel activity. Testis-specific.

The protein resides in the cell projection. It localises to the cilium. It is found in the flagellum membrane. The catalysed reaction is Ca(2+)(in) = Ca(2+)(out). Its activity is regulated as follows. The CatSper calcium channel is indirectly activated by extracellular progesterone and prostaglandins following the sequence: progesterone &gt; PGF1-alpha = PGE1 &gt; PGA1 &gt; PGE2 &gt;&gt; PGD2. The CatSper calcium channel is directly inhibited by endocannabinoid 2-arachidonoylglycerol (2AG). Indirect activation by progesterone takes place via the following mechanism: progesterone binds and activates the acylglycerol lipase ABHD2, which in turn mediates hydrolysis of 2AG inhibitor, relieving inhibition of the CatSper channel. The primary effect of progesterone activation is to shift voltage dependence towards more physiological, negative membrane potentials; it is not mediated by metabotropic receptors and second messengers. Sperm capacitation enhances the effect of progesterone by providing additional negative shift. Also activated by the elevation of intracellular pH. Pore-forming subunit of the CatSper complex, a sperm-specific voltage-gated calcium channel that plays a central role in calcium-dependent physiological responses essential for successful fertilization, such as sperm hyperactivation, acrosome reaction and chemotaxis towards the oocyte. This Homo sapiens (Human) protein is Cation channel sperm-associated protein 1 (CATSPER1).